Here is a 474-residue protein sequence, read N- to C-terminus: uncharacterized protein (474 aa).

The chain crosses the membrane as a helical span at residues 374 to 398 (GLICYLALFSISLMIENIIGLTISL).

It localises to the membrane. This is an uncharacterized protein from Borreliella burgdorferi (strain ATCC 35210 / DSM 4680 / CIP 102532 / B31) (Borrelia burgdorferi).